Here is an 829-residue protein sequence, read N- to C-terminus: MAVKTPFLKLLPLLLLLLHFPFSFSTIPLGSVIYASGSNQNWPSPNSTFSVSFVPSPSPNSFLAAVSFAGSVPIWSAGTVDSRGSLRLHTSGSLRLTNGSGTTVWDSKTDRLGVTSGSIEDTGEFILLNNRSVPVWSSFDNPTDTIVQSQNFTAGKILRSGLYSFQLERSGNLTLRWNTSAIYWNHGLNSSFSSNLSSPRLSLQTNGVVSIFESNLLGGAEIVYSGDYGDSNTFRFLKLDDDGNLRIYSSASRNSGPVNAHWSAVDQCLVYGYCGNFGICSYNDTNPICSCPSRNFDFVDVNDRRKGCKRKVELSDCSGNTTMLDLVHTRLFTYEDDPNSESFFAGSSPCRANCLSSVLCLASVSMSDGSGNCWQKHPGSFFTGYQWPSVPSTSYVKVCGPVVANTLERATKGDDNNSKVHLWIVAVAVIAGLLGLVAVEIGLWWCCCRKNPRFGTLSSHYTLLEYASGAPVQFTYKELQRCTKSFKEKLGAGGFGTVYRGVLTNRTVVAVKQLEGIEQGEKQFRMEVATISSTHHLNLVRLIGFCSQGRHRLLVYEFMRNGSLDNFLFTTDSAKFLTWEYRFNIALGTAKGITYLHEECRDCIVHCDIKPENILVDDNFAAKVSDFGLAKLLNPKDNRYNMSSVRGTRGYLAPEWLANLPITSKSDVYSYGMVLLELVSGKRNFDVSEKTNHKKFSIWAYEEFEKGNTKAILDTRLSEDQTVDMEQVMRMVKTSFWCIQEQPLQRPTMGKVVQMLEGITEIKNPLCPKTISEVSFSGNSMSTSHASMFVASGPTRSSSFSATRSFQTMGITSSGPASTRISEGSMLGS.

The first 25 residues, 1–25 (MAVKTPFLKLLPLLLLLLHFPFSFS), serve as a signal peptide directing secretion. Bulb-type lectin domains are found at residues 26 to 140 (TIPL…SSFD) and 143 to 260 (TDTI…PVNA). Topologically, residues 26-421 (TIPLGSVIYA…KGDDNNSKVH (396 aa)) are extracellular. N-linked (GlcNAc...) asparagine glycans are attached at residues Asn46, Asn98, Asn130, Asn151, Asn172, Asn178, Asn189, and Asn195. Residues 264 to 301 (AVDQCLVYGYCGNFGICSYNDTNPICSCPSRNFDFVDV) form the EGF-like domain. Disulfide bonds link Cys268-Cys280, Cys274-Cys289, Cys317-Cys399, Cys350-Cys373, and Cys354-Cys360. N-linked (GlcNAc...) asparagine glycans are attached at residues Asn283 and Asn320. The 83-residue stretch at 317-399 (CSGNTTMLDL…VPSTSYVKVC (83 aa)) folds into the Apple domain. Asn416 carries N-linked (GlcNAc...) asparagine glycosylation. A helical transmembrane segment spans residues 422 to 442 (LWIVAVAVIAGLLGLVAVEIG). Over 443–829 (LWWCCCRKNP…RISEGSMLGS (387 aa)) the chain is Cytoplasmic. The Protein kinase domain occupies 484–759 (KSFKEKLGAG…GKVVQMLEGI (276 aa)). ATP is bound by residues 490–498 (LGAGGFGTV) and Lys512. The residue at position 532 (Ser532) is a Phosphoserine. The segment at 572–589 (DSAKFLTWEYRFNIALGT) is caM-binding. Asp608 (proton acceptor) is an active-site residue. 2 positions are modified to phosphoserine: Ser625 and Ser799.

Belongs to the protein kinase superfamily. Ser/Thr protein kinase family.

The protein resides in the cell membrane. The catalysed reaction is L-seryl-[protein] + ATP = O-phospho-L-seryl-[protein] + ADP + H(+). The enzyme catalyses L-threonyl-[protein] + ATP = O-phospho-L-threonyl-[protein] + ADP + H(+). This is G-type lectin S-receptor-like serine/threonine-protein kinase At1g34300 from Arabidopsis thaliana (Mouse-ear cress).